A 404-amino-acid polypeptide reads, in one-letter code: Cysteine desulfurase IscS (404 aa).

Pyridoxal 5'-phosphate contacts are provided by residues 75 to 76 (AT), N155, Q183, and 203 to 205 (SSH). K206 carries the N6-(pyridoxal phosphate)lysine modification. Position 243 (T243) interacts with pyridoxal 5'-phosphate. C328 serves as the catalytic Cysteine persulfide intermediate. C328 is a [2Fe-2S] cluster binding site.

The protein belongs to the class-V pyridoxal-phosphate-dependent aminotransferase family. NifS/IscS subfamily. Homodimer. Forms a heterotetramer with IscU, interacts with other sulfur acceptors. The cofactor is pyridoxal 5'-phosphate.

It is found in the cytoplasm. The catalysed reaction is (sulfur carrier)-H + L-cysteine = (sulfur carrier)-SH + L-alanine. It participates in cofactor biosynthesis; iron-sulfur cluster biosynthesis. In terms of biological role, master enzyme that delivers sulfur to a number of partners involved in Fe-S cluster assembly, tRNA modification or cofactor biosynthesis. Catalyzes the removal of elemental sulfur atoms from cysteine to produce alanine. Functions as a sulfur delivery protein for Fe-S cluster synthesis onto IscU, an Fe-S scaffold assembly protein, as well as other S acceptor proteins. In Haemophilus influenzae (strain PittGG), this protein is Cysteine desulfurase IscS.